A 608-amino-acid polypeptide reads, in one-letter code: FAD-binding monooxygenase ktnD (608 aa).

Asn-4 carries N-linked (GlcNAc...) asparagine glycosylation. A helical membrane pass occupies residues 17-37 (ATVVIIGAGVSGMCMAIDLLH). Residues 56-59 (TWAN), 68-69 (DV), and Tyr-74 contribute to the FAD site. 66 to 68 (ASD) serves as a coordination point for NADP(+). N-linked (GlcNAc...) asparagine glycosylation is present at Asn-114. Residues 201–207 (NGASAIQ) and 224–225 (RS) contribute to the NADP(+) site. A glycan (N-linked (GlcNAc...) asparagine) is linked at Asn-325. A helical membrane pass occupies residues 535–555 (ALVSNVTLFLGVALAAGGVYW).

The protein belongs to the FAD-binding monooxygenase family. FAD serves as cofactor.

It is found in the membrane. Non-reducing polyketide synthase; part of the gene cluster that mediates the biosynthesis of the bicoumarin kotanin. The non-reducing polyketide synthase ktnS first catalyzes the formation of the pentaketidic 4,7-dihydroxy-5-methylcoumarin from acetyl coenzyme A and 4 malonyl coenzyme A molecules. Further O-methylation by ktnB leads to the formation of 7-demethylsiderin. Then, an oxidative phenol coupling catalyzed by the cytochrome P450 monooxygenase ktnC forms the 8,8'-dimer P-orlandin via dimerization the monomeric precursor, 7-demethylsiderin. P-orlandin is subsequently O-methylated in a stepwise fashion to demethylkotanin and kotanin. The function of ktnD within the pathway has not been determined yet. This chain is FAD-binding monooxygenase ktnD, found in Aspergillus niger (strain ATCC MYA-4892 / CBS 513.88 / FGSC A1513).